We begin with the raw amino-acid sequence, 126 residues long: UPF0538 protein C2orf76 homolog (126 aa).

It belongs to the UPF0538 family.

The polypeptide is UPF0538 protein C2orf76 homolog (Mus musculus (Mouse)).